The primary structure comprises 536 residues: Alpha-1,3-mannosyl-glycoprotein 4-beta-N-acetylglucosaminyltransferase A (536 aa).

Residues 1–6 lie on the Cytoplasmic side of the membrane; it reads MRLRNG. Residues 7 to 27 traverse the membrane as a helical; Signal-anchor for type II membrane protein segment; sequence TVATALVFITTFLSLSWYTAW. Positions 28–54 form a coiled coil; sequence QNGKEKLMAYQREFHALKERLRIAEHR. Residues 28–536 are Lumenal-facing; it reads QNGKEKLMAY…EIHIKRNPAD (509 aa). N-linked (GlcNAc...) asparagine glycans are attached at residues N77 and N458.

The protein belongs to the glycosyltransferase 54 family. The cofactor is a divalent metal cation. Post-translationally, N-glycosylated.

The protein localises to the golgi apparatus membrane. It is found in the secreted. It carries out the reaction N(4)-{beta-D-GlcNAc-(1-&gt;2)-alpha-D-Man-(1-&gt;3)-[beta-D-GlcNAc-(1-&gt;2)-alpha-D-Man-(1-&gt;6)]-beta-D-Man-(1-&gt;4)-beta-D-GlcNAc-(1-&gt;4)-beta-D-GlcNAc}-L-asparaginyl-[protein] + UDP-N-acetyl-alpha-D-glucosamine = N(4)-{beta-D-GlcNAc-(1-&gt;2)-[beta-D-GlcNAc-(1-&gt;4)]-alpha-D-Man-(1-&gt;3)-[beta-D-GlcNAc-(1-&gt;2)-alpha-D-Man-(1-&gt;6)]-beta-D-Man-(1-&gt;4)-beta-D-GlcNAc-(1-&gt;4)-beta-D-GlcNAc}-L-asparaginyl-[protein] + UDP + H(+). It catalyses the reaction an N(4)-{beta-D-GlcNAc-(1-&gt;2)-alpha-D-Man-(1-&gt;3)-[alpha-D-Man-(1-&gt;6)]-beta-D-Man-(1-&gt;4)-beta-D-GlcNAc-(1-&gt;4)-beta-D-GlcNAc}-L-asparaginyl-[protein] + UDP-N-acetyl-alpha-D-glucosamine = an N(4)-{beta-D-GlcNAc-(1-&gt;2)-[beta-D-GlcNAc-(1-&gt;4)]-alpha-D-Man-(1-&gt;3)-[alpha-D-Man-(1-&gt;6)]-beta-D-Man-(1-&gt;4)-beta-D-GlcNAc-(1-&gt;4)-beta-D-GlcNAc}-L-asparaginyl-[protein] + UDP + H(+). The enzyme catalyses an N(4)-{beta-D-GlcNAc-(1-&gt;2)-alpha-D-Man-(1-&gt;3)-[beta-D-GlcNAc-(1-&gt;2)-[beta-D-GlcNAc-(1-&gt;6)]-alpha-D-Man-(1-&gt;6)]-beta-D-Man-(1-&gt;4)-beta-D-GlcNAc-(1-&gt;4)-beta-D-GlcNAc}-L-asparaginyl-[protein] + UDP-N-acetyl-alpha-D-glucosamine = an N(4)-{beta-D-GlcNAc-(1-&gt;2)-[beta-D-GlcNAc-(1-&gt;4)]-alpha-D-Man-(1-&gt;3)-[beta-D-GlcNAc-(1-&gt;2)-[beta-D-GlcNAc-(1-&gt;6)]-alpha-D-Man-(1-&gt;6)]-beta-D-Man-(1-&gt;4)-beta-D-GlcNAc-(1-&gt;4)-beta-D-GlcNAc}-L-asparaginyl-[protein] + UDP + H(+). The catalysed reaction is an N(4)-{beta-D-GlcNAc-(1-&gt;2)-alpha-D-Man-(1-&gt;3)-[beta-D-GlcNAc-(1-&gt;2)-alpha-D-Man-(1-&gt;6)]-beta-D-Man-(1-&gt;4)-beta-D-GlcNAc-(1-&gt;4)-[alpha-L-Fuc-(1-&gt;6)]-beta-D-GlcNAc}-L-asparaginyl-[protein] + UDP-N-acetyl-alpha-D-glucosamine = N(4)-{beta-D-GlcNAc-(1-&gt;2)-[beta-D-GlcNAc-(1-&gt;4)]-alpha-D-Man-(1-&gt;3)-[beta-D-GlcNAc-(1-&gt;2)-alpha-D-Man-(1-&gt;6)]-beta-D-Man-(1-&gt;4)-beta-D-GlcNAc-(1-&gt;4)-[alpha-L-Fuc-(1-&gt;6)]-beta-D-GlcNAc}-asparaginyl-[protein] + UDP + H(+). It carries out the reaction an N(4)-{beta-D-GlcNAc-(1-&gt;2)-alpha-D-Man-(1-&gt;3)-[beta-D-Gal-(1-&gt;4)-beta-D-GlcNAc-(1-&gt;2)-alpha-D-Man-(1-&gt;6)]-beta-D-Man-(1-&gt;4)-beta-D-GlcNAc-(1-&gt;4)-beta-D-GlcNAc}-L-asparaginyl-[protein] + UDP-N-acetyl-alpha-D-glucosamine = an N(4)-{beta-D-GlcNAc-(1-&gt;2)-[beta-D-GlcNAc-(1-&gt;4)]-alpha-D-Man-(1-&gt;3)-[beta-D-Gal-(1-&gt;4)-beta-D-GlcNAc-(1-&gt;2)-alpha-D-Man-(1-&gt;6)]-beta-D-Man-(1-&gt;4)-beta-D-GlcNAc-(1-&gt;4)-beta-D-GlcNAc}-L-asparaginyl-[protein] + UDP + H(+). It catalyses the reaction N(4)-{beta-D-GlcNAc-(1-&gt;2)-alpha-D-Man-(1-&gt;3)-[alpha-D-Man-(1-&gt;3)-{alpha-D-Man-(1-&gt;6)}-alpha-D-Man-(1-&gt;6)]-beta-D-Man-(1-&gt;4)-beta-D-GlcNAc-(1-&gt;4)-beta-D-GlcNAc}-asparaginyl-[protein] + UDP-N-acetyl-alpha-D-glucosamine = N(4)-{beta-D-GlcNAc-(1-&gt;2)-[beta-D-GlcNAc-(1-&gt;4)]-alpha-D-Man-(1-&gt;3)-[alpha-D-Man-(1-&gt;3)-{alpha-D-Man-(1-&gt;6)}-alpha-D-Man-(1-&gt;6)]-beta-D-Man-(1-&gt;4)-beta-D-GlcNAc-(1-&gt;4)-beta-D-GlcNAc}-asparaginyl-[protein] + UDP + H(+). The enzyme catalyses N(4)-{beta-D-GlcNAc-(1-&gt;2)-alpha-D-Man-(1-&gt;3)-beta-D-Man-(1-&gt;4)-beta-D-GlcNAc-(1-&gt;4)-beta-D-GlcNAc}-asparaginyl-[protein] + UDP-N-acetyl-alpha-D-glucosamine = N(4)-{beta-D-GlcNAc-(1-&gt;2)-[beta-D-GlcNAc-(1-&gt;4)]-alpha-D-Man-(1-&gt;3)-beta-D-Man-(1-&gt;4)-beta-D-GlcNAc-(1-&gt;4)-beta-D-GlcNAc}-asparaginyl-[protein] + UDP + H(+). The protein operates within protein modification; protein glycosylation. Its activity is regulated as follows. Inhibited by UDP. Functionally, glycosyltransferase that catalyze the transfer of GlcNAc from UDP-GlcNAc to the GlcNAcbeta1-2Manalpha1-3 arm of the core structure of N-linked glycans through a beta1-4 linkage and participates in the production of tri- and tetra-antennary N-linked sugar chains. Involved in glucose transport by mediating SLC2A2/GLUT2 glycosylation, thereby controlling cell-surface expression of SLC2A2 in pancreatic beta cells. In Xenopus tropicalis (Western clawed frog), this protein is Alpha-1,3-mannosyl-glycoprotein 4-beta-N-acetylglucosaminyltransferase A.